Here is a 295-residue protein sequence, read N- to C-terminus: Probable lipid kinase YegS-like (295 aa).

Residues 1 to 129 enclose the DAGKc domain; the sequence is MQGRKAMLVL…IDLGQAGDQL (129 aa). ATP contacts are provided by residues Thr-39, 65–71, and Thr-92; that span reads GDGTLRD. The Mg(2+) site is built by Met-210, Asp-213, and Leu-215. The active-site Proton acceptor is Glu-264.

The protein belongs to the diacylglycerol/lipid kinase family. YegS lipid kinase subfamily. It depends on Mg(2+) as a cofactor. Ca(2+) serves as cofactor.

It is found in the cytoplasm. Its function is as follows. Probably phosphorylates lipids; the in vivo substrate is unknown. The protein is Probable lipid kinase YegS-like of Pseudomonas putida (strain ATCC 47054 / DSM 6125 / CFBP 8728 / NCIMB 11950 / KT2440).